Here is a 177-residue protein sequence, read N- to C-terminus: Alkyl hydroperoxide reductase AhpD (177 aa).

The active-site Proton donor is the Cys-131. A disulfide bridge connects residues Cys-131 and Cys-134. Cys-134 functions as the Cysteine sulfenic acid (-SOH) intermediate in the catalytic mechanism.

The protein belongs to the AhpD family. As to quaternary structure, homotrimer.

It carries out the reaction N(6)-[(R)-dihydrolipoyl]-L-lysyl-[lipoyl-carrier protein] + a hydroperoxide = N(6)-[(R)-lipoyl]-L-lysyl-[lipoyl-carrier protein] + an alcohol + H2O. In terms of biological role, antioxidant protein with alkyl hydroperoxidase activity. Required for the reduction of the AhpC active site cysteine residues and for the regeneration of the AhpC enzyme activity. In Streptomyces griseus subsp. griseus (strain JCM 4626 / CBS 651.72 / NBRC 13350 / KCC S-0626 / ISP 5235), this protein is Alkyl hydroperoxide reductase AhpD.